Here is a 383-residue protein sequence, read N- to C-terminus: Embryonic pepsinogen (383 aa).

The N-terminal stretch at 1–16 (MRSLALLCAVLALSDG) is a signal peptide. The 305-residue stretch at 76-380 (YYGTISIGTP…DRANNRVGLA (305 aa)) folds into the Peptidase A1 domain. Aspartate 94 is an active-site residue. A disulfide bridge connects residues cysteine 107 and cysteine 112. Asparagine 132 and asparagine 204 each carry an N-linked (GlcNAc...) asparagine glycan. Cysteine 267 and cysteine 271 form a disulfide bridge. Residue aspartate 276 is part of the active site. Residue asparagine 309 is glycosylated (N-linked (GlcNAc...) asparagine). Cysteines 310 and 344 form a disulfide. N-linked (GlcNAc...) asparagine glycosylation is present at asparagine 350.

Belongs to the peptidase A1 family.

The chain is Embryonic pepsinogen from Gallus gallus (Chicken).